The sequence spans 197 residues: Imidazoleglycerol-phosphate dehydratase (197 aa).

It belongs to the imidazoleglycerol-phosphate dehydratase family.

Its subcellular location is the cytoplasm. The enzyme catalyses D-erythro-1-(imidazol-4-yl)glycerol 3-phosphate = 3-(imidazol-4-yl)-2-oxopropyl phosphate + H2O. Its pathway is amino-acid biosynthesis; L-histidine biosynthesis; L-histidine from 5-phospho-alpha-D-ribose 1-diphosphate: step 6/9. This Xanthobacter autotrophicus (strain ATCC BAA-1158 / Py2) protein is Imidazoleglycerol-phosphate dehydratase.